The chain runs to 129 residues: uncharacterized protein (129 aa).

This is an uncharacterized protein from Invertebrate iridescent virus 6 (IIV-6).